The chain runs to 731 residues: Wall-associated receptor kinase-like 5 (731 aa).

A signal peptide spans 1–26 (MKTKTYRFVCLVASVLTLQLMNGSSA). Residues 27 to 360 (ATPPPPPNSK…PAKPLVLQGV (334 aa)) lie on the Extracellular side of the membrane. Residues asparagine 37, asparagine 43, asparagine 73, asparagine 96, asparagine 124, asparagine 137, asparagine 236, and asparagine 272 are each glycosylated (N-linked (GlcNAc...) asparagine). The atypical EGF-like stretch occupies residues 285–342 (CLCEYGYFSEMSYRNCYCSLGFTGNPYLRGGCIDNDDCKGPNICEEGTCVNVPGGYRC). Cystine bridges form between cysteine 287–cysteine 300, cysteine 322–cysteine 333, and cysteine 328–cysteine 342. A helical membrane pass occupies residues 361-381 (LLGLMGLLFLVVGTLGLIIFI). The Cytoplasmic segment spans residues 382–731 (KKRRRIISSR…EDQVMEISRE (350 aa)). A Protein kinase domain is found at 432–705 (FSVKRVLGKG…REASLELERI (274 aa)). ATP is bound by residues 438–446 (LGKGSQGTV) and lysine 460. Tyrosine 505 is subject to Phosphotyrosine. Residue aspartate 557 is the Proton acceptor of the active site. Residues threonine 591 and threonine 596 each carry the phosphothreonine modification. At tyrosine 604 the chain carries Phosphotyrosine. The disordered stretch occupies residues 709-731 (PEDLEAHIENDDEEDQVMEISRE).

It belongs to the protein kinase superfamily. Ser/Thr protein kinase family. In terms of tissue distribution, preferentially expressed in roots and flowers.

It is found in the membrane. It catalyses the reaction L-seryl-[protein] + ATP = O-phospho-L-seryl-[protein] + ADP + H(+). It carries out the reaction L-threonyl-[protein] + ATP = O-phospho-L-threonyl-[protein] + ADP + H(+). Functionally, serine/threonine-protein kinase that may function as a signaling receptor of extracellular matrix component. May be involved in plant's response to pathogen infection. The sequence is that of Wall-associated receptor kinase-like 5 (WAKL5) from Arabidopsis thaliana (Mouse-ear cress).